A 190-amino-acid polypeptide reads, in one-letter code: Threonylcarbamoyl-AMP synthase (190 aa).

The YrdC-like domain occupies 7-190; the sequence is GDAIAAAIDV…ALTGELFRQG (184 aa).

It belongs to the SUA5 family. TsaC subfamily.

It is found in the cytoplasm. It catalyses the reaction L-threonine + hydrogencarbonate + ATP = L-threonylcarbamoyladenylate + diphosphate + H2O. Functionally, required for the formation of a threonylcarbamoyl group on adenosine at position 37 (t(6)A37) in tRNAs that read codons beginning with adenine. Catalyzes the conversion of L-threonine, HCO(3)(-)/CO(2) and ATP to give threonylcarbamoyl-AMP (TC-AMP) as the acyladenylate intermediate, with the release of diphosphate. The chain is Threonylcarbamoyl-AMP synthase from Shigella flexneri.